A 362-amino-acid polypeptide reads, in one-letter code: Cobalt-precorrin-5B C(1)-methyltransferase (362 aa).

This sequence belongs to the CbiD family.

The catalysed reaction is Co-precorrin-5B + S-adenosyl-L-methionine = Co-precorrin-6A + S-adenosyl-L-homocysteine. The protein operates within cofactor biosynthesis; adenosylcobalamin biosynthesis; cob(II)yrinate a,c-diamide from sirohydrochlorin (anaerobic route): step 6/10. Catalyzes the methylation of C-1 in cobalt-precorrin-5B to form cobalt-precorrin-6A. The chain is Cobalt-precorrin-5B C(1)-methyltransferase from Burkholderia ambifaria (strain MC40-6).